A 321-amino-acid polypeptide reads, in one-letter code: Inner membrane protein YtfF (321 aa).

Over 1–4 the chain is Cytoplasmic; the sequence is MISG. A helical membrane pass occupies residues 5-25; that stretch reads VLYALLAGLMWGLIFVGPLIV. Positions 13-141 constitute an EamA domain; that stretch reads LMWGLIFVGP…IGIGLACVNI (129 aa). Topologically, residues 26-30 are periplasmic; the sequence is PEYPA. Residues 31–51 form a helical membrane-spanning segment; sequence MLQSMGRYLALGLIALPIAWL. The Cytoplasmic segment spans residues 52–65; that stretch reads GRVRLRQLARRDWL. Residues 66 to 86 form a helical membrane-spanning segment; sequence TALMLTMMGNLIYYFCLASAI. At 87–92 the chain is on the periplasmic side; the sequence is QRTGAP. The helical transmembrane segment at 93 to 113 threads the bilayer; the sequence is VSTMIIGTLPVVIPVFANLLY. Topologically, residues 114-120 are cytoplasmic; that stretch reads SQRDGKL. Residues 121–141 traverse the membrane as a helical segment; that stretch reads AWGKLAPALICIGIGLACVNI. The Periplasmic portion of the chain corresponds to 142-154; that stretch reads AELNHGLPDFDWA. A helical transmembrane segment spans residues 155 to 175; that stretch reads RYTSGIVLALVSVVCWAWYAL. At 176–194 the chain is on the cytoplasmic side; it reads RNARWLRENPDKHPMMWAT. Residues 195-215 form a helical membrane-spanning segment; sequence AQALVTLPVSLIGYLVACYWL. At 216–230 the chain is on the periplasmic side; sequence NTQTPDFSLPFGPRP. Residues 231-251 traverse the membrane as a helical segment; sequence LVFISLMVAIAVLCSWVGALC. The Cytoplasmic portion of the chain corresponds to 252-261; that stretch reads WNVASQLLPT. Residues 262–282 form a helical membrane-spanning segment; the sequence is VILGPLIVFETLAGLLYTFLL. Residues 283-285 are Periplasmic-facing; it reads RQQ. The helical transmembrane segment at 286 to 306 threads the bilayer; sequence MPPLMTLSGIALLVIGVVIAV. The Cytoplasmic portion of the chain corresponds to 307 to 321; that stretch reads RAKPEKPLTESVSES.

Its subcellular location is the cell inner membrane. The polypeptide is Inner membrane protein YtfF (ytfF) (Escherichia coli (strain K12)).